Reading from the N-terminus, the 254-residue chain is Alcohol dehydrogenase (254 aa).

10–33 serves as a coordination point for NAD(+); that stretch reads FVAGLGGIGLDTSREIVKSGPKNL. Ser138 serves as a coordination point for substrate. Residue Tyr151 is the Proton acceptor of the active site.

This sequence belongs to the short-chain dehydrogenases/reductases (SDR) family. As to quaternary structure, homodimer.

It catalyses the reaction a primary alcohol + NAD(+) = an aldehyde + NADH + H(+). It carries out the reaction a secondary alcohol + NAD(+) = a ketone + NADH + H(+). This Drosophila hawaiiensis (Fruit fly) protein is Alcohol dehydrogenase (Adh).